The following is a 145-amino-acid chain: Lysozyme-like protein 4 (145 aa).

Residues 1-19 (MKASVVLSLIGYLVVPSDT) form the signal peptide. Residues 20–145 (AVLGRCVVAK…LARWLDGCKL (126 aa)) enclose the C-type lysozyme domain. Disulfide bonds link Cys-25–Cys-143, Cys-49–Cys-130, Cys-84–Cys-95, and Cys-91–Cys-109. The active site involves Glu-54.

The protein belongs to the glycosyl hydrolase 22 family. Monomer.

It is found in the secreted. The protein resides in the cytoplasmic vesicle. The protein localises to the secretory vesicle. It localises to the acrosome. Its subcellular location is the cell projection. It is found in the cilium. The protein resides in the flagellum. Functionally, may be involved in fertilization. Has no detectable bacteriolytic and lysozyme activities in vitro. In Bos taurus (Bovine), this protein is Lysozyme-like protein 4 (LYZL4).